The following is a 183-amino-acid chain: ATP synthase subunit b, chloroplastic (183 aa).

A helical transmembrane segment spans residues 28 to 48; it reads DIFEANVINILLLLFGLIYVL.

Belongs to the ATPase B chain family. As to quaternary structure, F-type ATPases have 2 components, F(1) - the catalytic core - and F(0) - the membrane proton channel. F(1) has five subunits: alpha(3), beta(3), gamma(1), delta(1), epsilon(1). F(0) has four main subunits: a(1), b(1), b'(1) and c(10-14). The alpha and beta chains form an alternating ring which encloses part of the gamma chain. F(1) is attached to F(0) by a central stalk formed by the gamma and epsilon chains, while a peripheral stalk is formed by the delta, b and b' chains.

It is found in the plastid. It localises to the chloroplast thylakoid membrane. In terms of biological role, f(1)F(0) ATP synthase produces ATP from ADP in the presence of a proton or sodium gradient. F-type ATPases consist of two structural domains, F(1) containing the extramembraneous catalytic core and F(0) containing the membrane proton channel, linked together by a central stalk and a peripheral stalk. During catalysis, ATP synthesis in the catalytic domain of F(1) is coupled via a rotary mechanism of the central stalk subunits to proton translocation. Its function is as follows. Component of the F(0) channel, it forms part of the peripheral stalk, linking F(1) to F(0). This is ATP synthase subunit b, chloroplastic from Porphyra purpurea (Red seaweed).